The following is a 362-amino-acid chain: Cobalt-precorrin-5B C(1)-methyltransferase (362 aa).

It belongs to the CbiD family.

It catalyses the reaction Co-precorrin-5B + S-adenosyl-L-methionine = Co-precorrin-6A + S-adenosyl-L-homocysteine. Its pathway is cofactor biosynthesis; adenosylcobalamin biosynthesis; cob(II)yrinate a,c-diamide from sirohydrochlorin (anaerobic route): step 6/10. Catalyzes the methylation of C-1 in cobalt-precorrin-5B to form cobalt-precorrin-6A. This chain is Cobalt-precorrin-5B C(1)-methyltransferase, found in Methanocaldococcus jannaschii (strain ATCC 43067 / DSM 2661 / JAL-1 / JCM 10045 / NBRC 100440) (Methanococcus jannaschii).